A 379-amino-acid chain; its full sequence is Protein psi1 (379 aa).

In terms of domain architecture, J spans 1–70 (MVADTKLYDC…RKLYDQYGIT (70 aa)). Disordered stretches follow at residues 69-95 (ITEGNAAPPPPGAEGGPGAGFGGFPGA) and 176-205 (FGGGGAGPHARRSHPSFGGSRPSQPPAQNE). The segment covering 81–95 (AEGGPGAGFGGFPGA) has biased composition (gly residues).

In terms of biological role, required for nuclear migration during mitosis. It is required for the normal initiation of translation. The protein is Protein psi1 (psi1) of Schizosaccharomyces pombe (strain 972 / ATCC 24843) (Fission yeast).